The following is a 416-amino-acid chain: Probable carboxypeptidase An18g06210 (416 aa).

Residues 1–16 form the signal peptide; sequence MKSPISLLAAVGVASA. Residues asparagine 54, asparagine 70, and asparagine 129 are each glycosylated (N-linked (GlcNAc...) asparagine). Residue aspartate 142 participates in Zn(2+) binding. Residue glutamate 174 is the Proton acceptor of the active site. Glutamate 175 serves as a coordination point for Zn(2+). N-linked (GlcNAc...) asparagine glycosylation is found at asparagine 187 and asparagine 319.

Belongs to the peptidase M20A family. Zn(2+) is required as a cofactor.

The protein resides in the secreted. The polypeptide is Probable carboxypeptidase An18g06210 (Aspergillus niger (strain ATCC MYA-4892 / CBS 513.88 / FGSC A1513)).